The primary structure comprises 183 residues: uncharacterized protein (183 aa).

This sequence belongs to the asfivirus S183L family.

This is an uncharacterized protein from Ornithodoros (relapsing fever ticks).